A 496-amino-acid polypeptide reads, in one-letter code: MRILNRVFLNTFQACFRRFVHQIPTIYALSTPPGTSAVAIVRISGPNACKVAKTLAGSVPKPRIASLRTIKHPVRSEVIDKALMLYFKKPSSFTGEDVVELQLHGGTAVVDVTLEAIKQSGIPNIRYAKPGEFSERAFYNGRADLTQLEGLIDVINAQTAEQLYSANKEAHGSIYDICFRWRKKLIEYRAFLEASIDFSEEHELDDIETIKLFEELNEMKDEIDAHIEGGKCKEVLRKGINVAILGPSNAGKSSLINLLANRRISIVSPQSGTTRDAIEVLVDINGFPVLLSDTAGLRKGEDVQEIEKIGIEIAKARAEESQLTLFVFPINYHSFSESLKQSEILETIKDCLRQRKPIHFLINKVDCVSDYTTMFKPIKAYLQKNFLIPENRIHAVSCKTKEGLIDFLQALSSTFECMVNPLTNNKIQANLGWNERQRQCLSSCSSHLSLALQKSSDIVVAAEEVKLATEDIGRVTGAVDMENVFSVIFSKFCVGK.

Residues 1 to 19 (MRILNRVFLNTFQACFRRF) constitute a mitochondrion transit peptide. In terms of domain architecture, TrmE-type G spans 239-416 (GINVAILGPS…FLQALSSTFE (178 aa)). GTP-binding positions include 246-253 (GPSNAGKS), 293-297 (DTAGL), and 363-366 (NKVD).

Belongs to the TRAFAC class TrmE-Era-EngA-EngB-Septin-like GTPase superfamily. TrmE GTPase family.

The protein localises to the mitochondrion. Its function is as follows. GTPase involved in the 5-carboxymethylaminomethyl modification (mnm(5)s(2)U34) of the wobble uridine base in mitochondrial tRNAs. This is tRNA modification GTPase mss1, mitochondrial (mss1) from Schizosaccharomyces pombe (strain 972 / ATCC 24843) (Fission yeast).